A 406-amino-acid polypeptide reads, in one-letter code: Cysteine desulfurase (406 aa).

K226 carries the N6-(pyridoxal phosphate)lysine modification. Residue C364 is the Cysteine persulfide intermediate of the active site.

Belongs to the class-V pyridoxal-phosphate-dependent aminotransferase family. Csd subfamily. Homodimer. Interacts with SufE and the SufBCD complex composed of SufB, SufC and SufD. The interaction with SufE is required to mediate the direct transfer of the sulfur atom from the S-sulfanylcysteine. It depends on pyridoxal 5'-phosphate as a cofactor.

The protein localises to the cytoplasm. The catalysed reaction is (sulfur carrier)-H + L-cysteine = (sulfur carrier)-SH + L-alanine. It catalyses the reaction L-selenocysteine + AH2 = hydrogenselenide + L-alanine + A + H(+). It functions in the pathway cofactor biosynthesis; iron-sulfur cluster biosynthesis. Cysteine desulfurases mobilize the sulfur from L-cysteine to yield L-alanine, an essential step in sulfur metabolism for biosynthesis of a variety of sulfur-containing biomolecules. Component of the suf operon, which is activated and required under specific conditions such as oxidative stress and iron limitation. Acts as a potent selenocysteine lyase in vitro, that mobilizes selenium from L-selenocysteine. Selenocysteine lyase activity is however unsure in vivo. In Escherichia coli O157:H7 (strain EC4115 / EHEC), this protein is Cysteine desulfurase.